The sequence spans 123 residues: Cyclic ether formation enzyme xenC (123 aa).

A signal peptide spans 1–24 (MSSLLLSDVLSYGIFGFSALCVQA). 2 helical membrane-spanning segments follow: residues 58-78 (SALR…LWSP) and 102-122 (LGES…AILV).

This sequence belongs to the cyclic ether formation enzyme xenC family.

The protein localises to the membrane. The protein operates within mycotoxin biosynthesis. In terms of biological role, cyclic ether formation enzyme; part of the gene cluster that mediates the biosynthesis of xenoacremones such as xenoacremone A, a compound that shows inhibitory activity toward the PI3K/AKT signaling pathway and which has the ability to induce apoptosis of A549 lung cancer cells. Within the pathway, cooperation of the hybrid PKS-NRPS xenE and the trans-acting enoyl reductase xenG is responsible for the formation of the reduced tyrosine-nonaketide derivative. The alpha/beta hydrolase xenA then accelerates intramolecular nucleophilic attack to give a pyrrolidone derivative. Subsequently, three enzymes, xenF, xenD, and xenC, coordinately participate in the conversion to xenoacremone B. XenF catalyzes sigmatropic rearrangement to form an A-ring, which leads to an unusual intermediate with a hexane ring, which is required for the formation of the tricarbocyclic product. Epoxidation catalyzed by xenD and the formation of the paracyclophane ether catalyzed by xenC initiate a spontaneous intramolecular Diels-Alder (IMDA) reaction to yield xenoacremone B. Spontaneous hydration of xenoacremone B leads to the formation of xenoacremone A, which undergoes subsequent methylation to afford xenoacremone C. This is Cyclic ether formation enzyme xenC from Xenoacremonium sinensis (Endophyte fungus).